We begin with the raw amino-acid sequence, 73 residues long: Large ribosomal subunit protein bL31 (73 aa).

Belongs to the bacterial ribosomal protein bL31 family. Type A subfamily. Part of the 50S ribosomal subunit.

Binds the 23S rRNA. The sequence is that of Large ribosomal subunit protein bL31 from Brucella abortus (strain 2308).